The primary structure comprises 465 residues: Endo-1,3-1,4-beta-glycanase EglC (465 aa).

Hemolysin-type calcium-binding repeat units lie at residues 33 to 50 (YGTAGNDSMWADSSVDVT), 105 to 122 (FGNSASNIISGGSGSQTI), and 123 to 140 (NGGAGNDVLTGAGGADTF). One can recognise a GH16 domain in the interval 213 to 462 (LDRSVLTQTF…YVKAYSLDAD (250 aa)). The active-site Nucleophile is Glu349. The active-site Proton donor is the Glu354.

This sequence belongs to the glycosyl hydrolase 16 family.

It is found in the secreted. It functions in the pathway glycan metabolism; exopolysaccharide biosynthesis. In terms of biological role, cleaves high molecular weight succinoglycan to yield LMW succinoglycan. Dynamically regulates the molecular weight distribution of succinoglycan by cleaving nascent succinoglycan only during a limited period after its synthesis, perhaps before it undergoes a time-dependent change in its conformation or aggregation state. This chain is Endo-1,3-1,4-beta-glycanase EglC (eglC), found in Rhizobium meliloti (strain 1021) (Ensifer meliloti).